The sequence spans 558 residues: MPEAAVKYQPYPQIVLPDRTWPSKAITEAPIWCSVDLRDGNQALVDPMGHDRKARMFHLLLDMGFKEIEIGFPSASQTDYDFARWCVEEGNVSEDVSLQVLVQCRPELIARTFEALEGAHRPIVHFYNSTSELQRRVVFGKDVAGIKQIATDAAKMITDMAAKAGGGYRFEYSPESFTGTELEVALEICNAVIEIVRPTADNKLIINLPSTVEMATPNIYADQIEWMCRNLDNRENLIVSLHPHNDRGTGIAATELGLMAGADRVEGTLFGNGERTGNVDVVTLALNMFTQGVDPKLDCSDIERIKEVYEYSNQMVIPERHPYVGELVYTAFSGSHQDAINKGMKAIKQANKPTWEVPYLPIDPRDVGRSYEAIIRINSQSGKGGIAYILQEDYGINLPRNLQIEFREEVQRITDEEGKELPSKRIHQRFIESYVEQPGARIKFVDHHTYPAGEHKGLRVVAAEITDGGETRQIEGKGTGPIDGFINALSIYLGIELSVADYSEHSLQHGSNAAAIAYVEVEYPGGKLFGVGINTNIVAASLEAIVSAANRVLDVVGK.

Positions 30 to 303 constitute a Pyruvate carboxyltransferase domain; that stretch reads PIWCSVDLRD…DPKLDCSDIE (274 aa). Positions 39, 242, 244, and 278 each coordinate Mg(2+). Residues 437 to 558 are regulatory domain; sequence QPGARIKFVD…ANRVLDVVGK (122 aa).

The protein belongs to the alpha-IPM synthase/homocitrate synthase family. LeuA type 2 subfamily. As to quaternary structure, homodimer. The cofactor is Mg(2+).

The protein resides in the cytoplasm. The catalysed reaction is 3-methyl-2-oxobutanoate + acetyl-CoA + H2O = (2S)-2-isopropylmalate + CoA + H(+). It participates in amino-acid biosynthesis; L-leucine biosynthesis; L-leucine from 3-methyl-2-oxobutanoate: step 1/4. Its function is as follows. Catalyzes the condensation of the acetyl group of acetyl-CoA with 3-methyl-2-oxobutanoate (2-ketoisovalerate) to form 3-carboxy-3-hydroxy-4-methylpentanoate (2-isopropylmalate). This chain is 2-isopropylmalate synthase, found in Rhizobium meliloti (strain 1021) (Ensifer meliloti).